The chain runs to 528 residues: GMP synthase [glutamine-hydrolyzing] (528 aa).

Residues 13-204 (SIVILDFGSQ…VHNICRSKPD (192 aa)) form the Glutamine amidotransferase type-1 domain. The active-site Nucleophile is cysteine 90. Residues histidine 178 and glutamate 180 contribute to the active site. The region spanning 205 to 403 (WTTNTFIDEA…LGLPEEIVNR (199 aa)) is the GMPS ATP-PPase domain. 232–238 (SGGVDSS) is an ATP binding site.

As to quaternary structure, homodimer.

The enzyme catalyses XMP + L-glutamine + ATP + H2O = GMP + L-glutamate + AMP + diphosphate + 2 H(+). The protein operates within purine metabolism; GMP biosynthesis; GMP from XMP (L-Gln route): step 1/1. Its function is as follows. Catalyzes the synthesis of GMP from XMP. The chain is GMP synthase [glutamine-hydrolyzing] from Prochlorococcus marinus (strain SARG / CCMP1375 / SS120).